The chain runs to 141 residues: Light-regulated protein 1, chloroplastic (141 aa).

A chloroplast-targeting transit peptide spans 1-41 (MQGALFIKPTILLPLPSSVSSPKLTFLLPHATKASRLSSLR). The segment covering 35 to 51 (SRLSSLRSNNSSSSSSL) has biased composition (low complexity). Residues 35 to 58 (SRLSSLRSNNSSSSSSLTSDPNTV) are disordered. The 2 X 15 AA approximate repeats stretch occupies residues 58 to 132 (VDYNSSILSV…ACDDLGGEFC (75 aa)). Tandem repeats lie at residues 67–81 (VFPAEACEVISGYAC) and 118–132 (VFREEACDDLGGEFC).

In terms of assembly, component of high molecular weight thylakoid LFNRs-containing protein complexes containing LIR1, LFNR1, LFNR2, TIC62 and TROL proteins. Interacts directly with LFNR1 and LFNR2; LIR1 increases the affinity of LFNR1 and LFNR2 for TIC62 and subsequent thylakoid relocalization. In terms of processing, may form interchain disulfide bonds with LFNR1 and LFNR2.

It is found in the plastid. The protein localises to the chloroplast thylakoid membrane. The protein resides in the chloroplast envelope. It localises to the chloroplast stroma. Functionally, thylakoid-determinant subunit of high molecular weight LFNRs-containing protein complexes. The protein is Light-regulated protein 1, chloroplastic of Arabidopsis thaliana (Mouse-ear cress).